Consider the following 292-residue polypeptide: MHSDAAAVNFQLNSHLSTLANIHKIYHTLNKLNLTEDIGQDDHQTGSLRSCSSSDCFNKVMPPRKKRRPASGDDLSAKKSRHDSMYRKYDSTRIKTEEEAFSSKRCLEWFYEYAGTDDVVGPEGMEKFCEDIGVEPENVVMLVLAWKLDAQNMGYFTLQEWLKGMTSLQCDTTEKLRNTLDYLRSFLNDSTNFKLIYRYAFDFAREKDQRSLDINTAKCMLGLLLGKIWPLFPVFHQFLEQSKYKVINKDQWCNVLEFSRTINLDLSNYDEDGAWPVLLDEFVEWYKDKQMS.

The tract at residues 43-83 (HQTGSLRSCSSSDCFNKVMPPRKKRRPASGDDLSAKKSRHD) is disordered. The span at 45–56 (TGSLRSCSSSDC) shows a compositional bias: polar residues. A Glycyl lysine isopeptide (Lys-Gly) (interchain with G-Cter in SUMO2) cross-link involves residue K95. Positions 101-287 (FSSKRCLEWF…LLDEFVEWYK (187 aa)) constitute a DCUN1 domain.

In terms of assembly, interacts (via the DCUN1 domain) with the unneddylated cullins: interacts with CUL1, CUL2, CUL3, CUL4A, CUL4B and CUL5; these interactions promote the cullin neddylation and the identity of the cullin dictates the affinity of the interaction. Interacts with RBX1 and RNF7. Interacts with CAND1; this interaction is bridged by cullins such as CUL3 and strongly inhibits the neddylation of CUL3. These CAND-cullin-DCNL complexes can only be neddylated in the presence of a substrate adapter. Interacts (via DCUN1 domain) with UBE2M (N-terminally acetylated form) and probably with UBE2F (N-terminally acetylated form).

The protein resides in the nucleus. Its function is as follows. Contributes to the neddylation of all cullins by transferring NEDD8 from N-terminally acetylated NEDD8-conjugating E2s enzyme to different cullin C-terminal domain-RBX complexes which are necessary for the activation of cullin-RING E3 ubiquitin ligases (CRLs). This is DCN1-like protein 4 from Homo sapiens (Human).